Here is an 87-residue protein sequence, read N- to C-terminus: Antitoxin epsilon (87 aa).

The protein belongs to the epsilon antitoxin family. In terms of assembly, in the presence of the zeta toxin, forms an inactive PezA(2)PezT(2) heterotetramer.

Its function is as follows. Antitoxin component of a type II toxin-antitoxin (TA) system. Neutralizes the toxic effect of cognate zeta toxin. Part of a postsegregational killing (PSK) system involved in the killing of plasmid-free cells. Continuous synthesis of the epsilon antitoxin is required to counteract the zeta toxin. This Lactococcus lactis subsp. lactis (Streptococcus lactis) protein is Antitoxin epsilon.